We begin with the raw amino-acid sequence, 66 residues long: uncharacterized protein (66 aa).

Positions Met1–Gly19 are cleaved as a signal peptide.

This is an uncharacterized protein from Saccharomyces cerevisiae (strain ATCC 204508 / S288c) (Baker's yeast).